The chain runs to 145 residues: Hemoglobin subunit beta (145 aa).

The region spanning 1–145 (MLTSEEKAAV…VANALAHRYH (145 aa)) is the Globin domain. Threonine 11 is subject to Phosphothreonine. Lysine 58 is subject to N6-acetyllysine. Heme b is bound at residue histidine 62. Residue lysine 81 is modified to N6-acetyllysine. Histidine 91 provides a ligand contact to heme b. At cysteine 92 the chain carries S-nitrosocysteine.

It belongs to the globin family. As to quaternary structure, heterotetramer of two alpha chains and two beta chains. In terms of tissue distribution, red blood cells.

Its function is as follows. Involved in oxygen transport from the lung to the various peripheral tissues. This chain is Hemoglobin subunit beta (HBB), found in Rangifer tarandus (Reindeer).